We begin with the raw amino-acid sequence, 488 residues long: Malonate-semialdehyde dehydrogenase (488 aa).

Residues Ala150, Phe152, Lys176, Glu179, Arg180, Ser229, and Thr251 each contribute to the NAD(+) site. The active-site Nucleophile is the Cys284. Glu382 provides a ligand contact to NAD(+).

This sequence belongs to the aldehyde dehydrogenase family. IolA subfamily. As to quaternary structure, homotetramer.

It carries out the reaction 3-oxopropanoate + NAD(+) + CoA + H2O = hydrogencarbonate + acetyl-CoA + NADH + H(+). The enzyme catalyses 2-methyl-3-oxopropanoate + NAD(+) + CoA + H2O = propanoyl-CoA + hydrogencarbonate + NADH + H(+). Its pathway is polyol metabolism; myo-inositol degradation into acetyl-CoA; acetyl-CoA from myo-inositol: step 7/7. Catalyzes the oxidation of malonate semialdehyde (MSA) and methylmalonate semialdehyde (MMSA) into acetyl-CoA and propanoyl-CoA, respectively. Is involved in a myo-inositol catabolic pathway. Bicarbonate, and not CO2, is the end-product of the enzymatic reaction. This is Malonate-semialdehyde dehydrogenase from Listeria innocua serovar 6a (strain ATCC BAA-680 / CLIP 11262).